Reading from the N-terminus, the 778-residue chain is Dolichyl-phosphate-mannose--protein mannosyltransferase 4 (778 aa).

A compositionally biased stretch (basic and acidic residues) spans 1 to 28 (MASKSEKAVKKAQKLSKEPSVELTDTKS). The disordered stretch occupies residues 1-44 (MASKSEKAVKKAQKLSKEPSVELTDTKSSDNVTPKQKSPNSTEE). Residues 29-41 (SDNVTPKQKSPNS) are compositionally biased toward polar residues. Asn-40 carries N-linked (GlcNAc...) asparagine glycosylation. The next 7 helical transmembrane spans lie at 60-80 (LAFV…LNLP), 103-123 (FFDL…KLAG), 145-165 (VTIR…VFLI), 196-216 (ILLD…YVRF), 223-243 (PFSR…SCTI), 248-268 (VGFF…WYLW), and 288-308 (FCLI…HFNI). Asn-335 carries an N-linked (GlcNAc...) asparagine glycan. MIR domains are found at residues 336 to 396 (STIL…ILPA), 408 to 467 (NVPV…VVMS), and 474 to 529 (RPLY…FDDI). Transmembrane regions (helical) follow at residues 608 to 628 (WWII…EILL), 644 to 664 (FYRS…PFFI), 669 to 689 (LFLH…GAFI), and 726 to 746 (VIEL…FTFF).

It belongs to the glycosyltransferase 39 family.

The protein localises to the endoplasmic reticulum membrane. The catalysed reaction is a di-trans,poly-cis-dolichyl beta-D-mannosyl phosphate + L-seryl-[protein] = 3-O-(alpha-D-mannosyl)-L-seryl-[protein] + a di-trans,poly-cis-dolichyl phosphate + H(+). The enzyme catalyses a di-trans,poly-cis-dolichyl beta-D-mannosyl phosphate + L-threonyl-[protein] = 3-O-(alpha-D-mannosyl)-L-threonyl-[protein] + a di-trans,poly-cis-dolichyl phosphate + H(+). The protein operates within protein modification; protein glycosylation. Transfers mannose from Dol-P-mannose to Ser or Thr residues on proteins. Required for normal cell wall and septum formation. This is Dolichyl-phosphate-mannose--protein mannosyltransferase 4 (ogm4) from Schizosaccharomyces pombe (strain 972 / ATCC 24843) (Fission yeast).